A 214-amino-acid polypeptide reads, in one-letter code: MSDMYHQLPPEIWVKIMDHLKEVSLLLTNKDFFGLFNLIDVEKNMIEHIVENGYLDVLKYIDSLKNQNKFIVDKEKFSVKSLDKYLIMSCEFGHLEMTKYFVSQGANVKTDNNMPLRLASQNGHIDTIKYLIENSVDVRANNDCALRMASLFGHINVVKYLVDMGADVTSDNNFAIIHTARSGRLELAKYLAEKGADIRASNDSAVIRASERDI.

5 ANK repeats span residues 41–70 (VEKN…QNKF), 81–110 (SLDK…NVKT), 111–140 (DNNM…DVRA), 142–170 (NDCA…DVTS), and 172–200 (NNFA…DIRA).

This chain is Putative ankyrin repeat protein R844, found in Acanthamoeba polyphaga mimivirus (APMV).